The primary structure comprises 460 residues: Armadillo repeat-containing protein LFR (460 aa).

The segment covering 1–10 (MSHVRSAPAG) has biased composition (low complexity). The disordered stretch occupies residues 1–32 (MSHVRSAPAGKSGGGGGSTPAKRGRPFGSTTG). ARM repeat units follow at residues 225 to 267 (ENET…NLAP), 321 to 360 (NEPF…NVAE), and 364 to 405 (DFRL…SLVS).

Interacts with CHR719, SWI3A and SWI3C. As to expression, expressed at low levels in coleoptiles, leaf tongues, mature leaves and nodes during the vegetative phase. Highly expressed in reproductive tissues such as young panicles, early developing seeds, embryos and endosperms.

It localises to the nucleus. In terms of biological role, plays critical roles in both embryo and endosperm development. Required for free nuclei division and cellularization in early endosperm development, by preventing premature cell death in the endosperm. Involved in the regulation of pattern formation and organ differentiation during embryogenesis, by regulating genes involved in the early stages of seed development. The polypeptide is Armadillo repeat-containing protein LFR (Oryza sativa subsp. japonica (Rice)).